Consider the following 368-residue polypeptide: Cytochrome P450 119 (368 aa).

Residues His76, Arg80, Thr257, Arg259, His315, and Cys317 each contribute to the heme site.

Belongs to the cytochrome P450 family. Requires heme as cofactor.

The protein localises to the cytoplasm. The catalysed reaction is 2 a phenolic donor + H2O2 = 2 a phenolic radical donor + 2 H2O. Its function is as follows. The endogenous substrate is not known. In vitro, catalyzes the H(2)O(2)-dependent epoxidation of styrene, cis-beta-methylstyrene, and cis-stilbene with retention of stereochemistry. Is able to use cumene hydroperoxide (CHP) or tert-butyl hydroperoxide (TBHP) instead of H(2)O(2) as the electron acceptor. Can also hydroxylate fatty acids such as lauric acid. This chain is Cytochrome P450 119 (cyp119), found in Sulfolobus acidocaldarius (strain ATCC 33909 / DSM 639 / JCM 8929 / NBRC 15157 / NCIMB 11770).